The sequence spans 670 residues: MAVATQSLEELSINAIRFLAVDAIEKAKSGHPGLPMGAAPMAFVLWNRFMRYNPKNPKWFNRDRFVLSAGHGSMLQYALLYLTGYDSVSIEDIKQFRQWESKTPGHPENFMTAGVEVTTGPLGQGIANGVGLAIAEAHLAAKFNKPDAKIVDHYTYVILGDGCNMEGVSGEAASFAGHLGLGKLIALYDDNHISIDGSTDVAFTEDVSKRFESYGWHVIHVKDGNTDLEAIHKAIEEAKAVTDKPTMIKVTTIIGYGSPNKSNTAGVHGAALGGDEVALTRQNLGWSHDPFVVPEDVLNYTRKAVERGAGYESDWNKTYADYKAKYPQEAAEFERYLSGKLADGWDKVLPSYTPEDKGLPTRKHSETCLNKLAAVLPELIGGSADLTHSNLTEIKGKGDFQKGQYQNPNIHFGVREHGMGAICNGIALHGSGLIPYGATFLIFSDYMRAPIRLSALSQAGSIWVMTHDSIGQGEDGPTHQPIETLASLRAIPNLTVIRPADGNETSGAYKVAIERAKNNAPTLLAFTRQNVPNLAGTSIDDVAKGGYIVVDTDGTPDLILIGTGSELSLCVTAAEKLKAEGKKVRVVSLAAWDLFDAQDAAYKESVLPKAVTKRLAVEAASSFGWHKYIGSEGDAVTIDRFGASAPGGVCLEKFGFSVDNVLAKAKQLLG.

H31 contributes to the substrate binding site. Residues H71 and 120–122 contribute to the thiamine diphosphate site; that span reads GPL. Residue D161 coordinates Mg(2+). Residues G162 and N191 each contribute to the thiamine diphosphate site. Mg(2+) contacts are provided by N191 and I193. 3 residues coordinate substrate: H268, R362, and S389. Thiamine diphosphate is bound at residue H268. E416 functions as the Proton donor in the catalytic mechanism. F443 serves as a coordination point for thiamine diphosphate. Substrate-binding residues include H467, D475, and R528.

As to quaternary structure, homodimer. The cofactor is Mg(2+). Requires Ca(2+) as cofactor. Mn(2+) serves as cofactor. Co(2+) is required as a cofactor. It depends on thiamine diphosphate as a cofactor.

It carries out the reaction D-sedoheptulose 7-phosphate + D-glyceraldehyde 3-phosphate = aldehydo-D-ribose 5-phosphate + D-xylulose 5-phosphate. In terms of biological role, catalyzes the transfer of a two-carbon ketol group from a ketose donor to an aldose acceptor, via a covalent intermediate with the cofactor thiamine pyrophosphate. This chain is Transketolase (tkt), found in Nostoc sp. (strain PCC 7120 / SAG 25.82 / UTEX 2576).